A 141-amino-acid polypeptide reads, in one-letter code: Large ribosomal subunit protein uL11 (141 aa).

This sequence belongs to the universal ribosomal protein uL11 family. As to quaternary structure, part of the ribosomal stalk of the 50S ribosomal subunit. Interacts with L10 and the large rRNA to form the base of the stalk. L10 forms an elongated spine to which L12 dimers bind in a sequential fashion forming a multimeric L10(L12)X complex. In terms of processing, one or more lysine residues are methylated.

In terms of biological role, forms part of the ribosomal stalk which helps the ribosome interact with GTP-bound translation factors. In Streptococcus gordonii (strain Challis / ATCC 35105 / BCRC 15272 / CH1 / DL1 / V288), this protein is Large ribosomal subunit protein uL11.